The sequence spans 640 residues: Threonine--tRNA ligase (640 aa).

Positions methionine 1–threonine 61 constitute a TGS domain. The catalytic stretch occupies residues aspartate 242–proline 533. 3 residues coordinate Zn(2+): cysteine 333, histidine 384, and histidine 510.

The protein belongs to the class-II aminoacyl-tRNA synthetase family. In terms of assembly, homodimer. Requires Zn(2+) as cofactor.

Its subcellular location is the cytoplasm. The enzyme catalyses tRNA(Thr) + L-threonine + ATP = L-threonyl-tRNA(Thr) + AMP + diphosphate + H(+). Functionally, catalyzes the attachment of threonine to tRNA(Thr) in a two-step reaction: L-threonine is first activated by ATP to form Thr-AMP and then transferred to the acceptor end of tRNA(Thr). Also edits incorrectly charged L-seryl-tRNA(Thr). The protein is Threonine--tRNA ligase of Prochlorococcus marinus (strain MIT 9313).